The sequence spans 127 residues: Large ribosomal subunit protein uL22 (127 aa).

It belongs to the universal ribosomal protein uL22 family. Part of the 50S ribosomal subunit.

In terms of biological role, this protein binds specifically to 23S rRNA; its binding is stimulated by other ribosomal proteins, e.g. L4, L17, and L20. It is important during the early stages of 50S assembly. It makes multiple contacts with different domains of the 23S rRNA in the assembled 50S subunit and ribosome. The globular domain of the protein is located near the polypeptide exit tunnel on the outside of the subunit, while an extended beta-hairpin is found that lines the wall of the exit tunnel in the center of the 70S ribosome. The chain is Large ribosomal subunit protein uL22 from Methylorubrum populi (strain ATCC BAA-705 / NCIMB 13946 / BJ001) (Methylobacterium populi).